A 501-amino-acid chain; its full sequence is Protein disulfide isomerase-like 1-1 (501 aa).

Positions 1–23 are cleaved as a signal peptide; the sequence is MAMRGFTLFSILVLSLCASSIRS. One can recognise a Thioredoxin 1 domain in the interval 24–141; sequence EETETKEFVL…IVTYLKKQSG (118 aa). An N-linked (GlcNAc...) asparagine glycan is attached at asparagine 39. Catalysis depends on nucleophile residues cysteine 59 and cysteine 62. Cysteine 59 and cysteine 62 form a disulfide bridge. A glycan (N-linked (GlcNAc...) asparagine) is linked at asparagine 275. The Thioredoxin 2 domain maps to 354 to 482; that stretch reads FKDGKIAPHK…FISFVDKNKD (129 aa). Residues cysteine 404 and cysteine 407 each act as nucleophile in the active site. A disulfide bridge links cysteine 404 with cysteine 407. The Prevents secretion from ER signature appears at 498–501; sequence KDEL.

This sequence belongs to the protein disulfide isomerase family. As to quaternary structure, interacts with RD21A, At3g19390, At5g43060. In terms of tissue distribution, highly expressed in flowers, stems and immature seeds, and at lower levels in leaves and siliques (at protein level).

Its subcellular location is the endoplasmic reticulum lumen. The protein resides in the vacuole. It carries out the reaction Catalyzes the rearrangement of -S-S- bonds in proteins.. In terms of biological role, protein disulfide isomerase that associates with RD21A protease for trafficking from the ER through the Golgi to lytic and protein storage vacuoles of endothelial cells in developing seeds. Regulates the timing of programmed cell death (PCD) of the endothelial cells by chaperoning and inhibiting cysteine proteases during their trafficking to vacuoles. This is Protein disulfide isomerase-like 1-1 (PDIL1-1) from Arabidopsis thaliana (Mouse-ear cress).